A 171-amino-acid chain; its full sequence is Small ribosomal subunit protein uS5 (171 aa).

One can recognise an S5 DRBM domain in the interval Leu16–Val79.

Belongs to the universal ribosomal protein uS5 family. In terms of assembly, part of the 30S ribosomal subunit. Contacts proteins S4 and S8.

Its function is as follows. With S4 and S12 plays an important role in translational accuracy. Located at the back of the 30S subunit body where it stabilizes the conformation of the head with respect to the body. The polypeptide is Small ribosomal subunit protein uS5 (Desulfotalea psychrophila (strain LSv54 / DSM 12343)).